Here is a 379-residue protein sequence, read N- to C-terminus: Cobalt-precorrin-5B C(1)-methyltransferase (379 aa).

This sequence belongs to the CbiD family.

The enzyme catalyses Co-precorrin-5B + S-adenosyl-L-methionine = Co-precorrin-6A + S-adenosyl-L-homocysteine. It functions in the pathway cofactor biosynthesis; adenosylcobalamin biosynthesis; cob(II)yrinate a,c-diamide from sirohydrochlorin (anaerobic route): step 6/10. Catalyzes the methylation of C-1 in cobalt-precorrin-5B to form cobalt-precorrin-6A. This Salmonella dublin (strain CT_02021853) protein is Cobalt-precorrin-5B C(1)-methyltransferase.